A 361-amino-acid chain; its full sequence is Inhibin alpha chain (361 aa).

A signal peptide spans 1–21 (MLPLLLPLQLLLLMVMKGGHG). A propeptide spanning residues 22 to 64 (CQGPELDRELVLAKVRALVLDALGPPNASKDGGKPVAQRLTRR) is cleaved from the precursor. A disordered region spans residues 45 to 82 (GPPNASKDGGKPVAQRLTRRHAHTGGSTRRSMENEDED). N-linked (GlcNAc...) asparagine glycosylation is found at Asn-48, Asn-144, and Asn-266. A propeptide spans 65 to 230 (HAHTGGSTRR…PPSVGERARR (166 aa)) (inhibin alpha N-terminal region). Disulfide bonds link Cys-260–Cys-323, Cys-289–Cys-358, and Cys-293–Cys-360.

The protein belongs to the TGF-beta family. Dimeric, linked by one or more disulfide bonds. Activin B is a dimer of alpha and beta-B. Inhibin A is a dimer of alpha and beta-A. Inhibin B is a dimer of alpha and beta-B. Interacts with TGFBR3L; this interaction regulates female fertility. In terms of processing, proteolytic processing yields a number of bioactive forms, consisting either solely of the mature alpha chain, of the most N-terminal propeptide linked through a disulfide bond to the mature alpha chain, or of the entire proprotein.

Its subcellular location is the secreted. In terms of biological role, inhibins and activins inhibit and activate, respectively, the secretion of follitropin by the pituitary gland. Inhibins/activins are involved in regulating a number of diverse functions such as hypothalamic and pituitary hormone secretion, gonadal hormone secretion, germ cell development and maturation, erythroid differentiation, insulin secretion, nerve cell survival, embryonic axial development or bone growth, depending on their subunit composition. Inhibins appear to oppose the functions of activins. Functionally, inhibin A is a dimer of alpha/INHA and beta-A/INHBA that functions as a feedback regulator in the hypothalamic-pituitary-gonadal (HPG) axis. Inhibits the secretion of FSH from the anterior pituitary gland by acting on pituitary gonadotrope cells. Antagonizes activin A by binding to the proteoglycan, betaglycan, and forming a stable complex with and, thereby, sequestering type II activin receptors while excluding type I receptor. Inhibin B is a dimer of alpha and beta-B that plays a crucial role in the regulation of the reproductive system by inhibiting the secretion of follicle-stimulating hormone (FSH) from the anterior pituitary gland. Thereby, maintains reproductive homeostasis in both males and females. Acts as a more potent suppressor of FSH release than inhibin A. Functions as competitive receptor antagonist binding activin type II receptors with high affinity in the presence of the TGF-beta type III coreceptor/TGFBR3L. In Trichosurus vulpecula (Brush-tailed possum), this protein is Inhibin alpha chain (INHA).